The sequence spans 302 residues: Probable protein ABIL4 (302 aa).

2 disordered regions span residues 151-179 (PSTGHKRTQAARLQTDNGQDSKPKPYPSA) and 220-256 (LLGKDIPASPMHKPLQPNGNTSFDAKKNVGSKDQPGF). Over residues 161 to 170 (ARLQTDNGQD) the composition is skewed to polar residues.

Belongs to the ABI family. As to quaternary structure, binds SCAR.

It localises to the cytoplasm. The protein localises to the cytoskeleton. In terms of biological role, involved in regulation of actin and microtubule organization. Part of a WAVE complex that activates the Arp2/3 complex. The protein is Probable protein ABIL4 of Oryza sativa subsp. japonica (Rice).